The chain runs to 299 residues: F-actin-capping protein subunit alpha-3 (299 aa).

S290 is subject to Phosphoserine.

The protein belongs to the F-actin-capping protein alpha subunit family. In terms of assembly, component of the F-actin capping complex, composed of a heterodimer of an alpha and a beta subunit. Component of the WASH complex, composed of F-actin-capping protein subunit alpha (CAPZA1, CAPZA2 or CAPZA3), F-actin-capping protein subunit beta (CAPZB), WASH (WASHC1, WASH2P, WASH3P, WASH4P, WASH5P or WASH6P), WASHC2 (WASHC2A or WASHC2C), WASHC3, WASHC4 and WASHC5. In terms of tissue distribution, expressed exclusively in testis and sperm. Highest expression is found in the neck region of ejaculated sperm with lower levels found in the tail and postacrosome region.

Its subcellular location is the cytoplasm. It localises to the cytoskeleton. Its function is as follows. F-actin-capping proteins bind in a Ca(2+)-independent manner to the fast growing ends of actin filaments (barbed end) thereby blocking the exchange of subunits at these ends. Unlike other capping proteins (such as gelsolin and severin), these proteins do not sever actin filaments. May play a role in the morphogenesis of spermatid. The protein is F-actin-capping protein subunit alpha-3 (CAPZA3) of Homo sapiens (Human).